Reading from the N-terminus, the 124-residue chain is Quinol oxidase subunit 4 (124 aa).

The next 3 helical transmembrane spans lie at 16-36, 44-64, and 78-98; these read IVGFILSIVLTLLALWVAVYT, LWIIFGFAFIQAALQLLMFMH, and TLFGFFGAIVIVLGSIWIFAA.

Belongs to the cytochrome c oxidase bacterial subunit 4 family.

Its subcellular location is the cell membrane. It catalyses the reaction 2 a quinol + O2 = 2 a quinone + 2 H2O. Catalyzes quinol oxidation with the concomitant reduction of oxygen to water. Major component for energy conversion during vegetative growth. This is Quinol oxidase subunit 4 (qoxD) from Bacillus subtilis (strain 168).